We begin with the raw amino-acid sequence, 39 residues long: MQRNPNPNNLPVELNRTSLYLGLLFVFVTGVLMSSYFFN.

Residues 18–38 (SLYLGLLFVFVTGVLMSSYFF) form a helical membrane-spanning segment.

Belongs to the PsbL family. PSII is composed of 1 copy each of membrane proteins PsbA, PsbB, PsbC, PsbD, PsbE, PsbF, PsbH, PsbI, PsbJ, PsbK, PsbL, PsbM, PsbT, PsbX, PsbY, PsbZ, Psb30/Ycf12, peripheral proteins PsbO, CyanoQ (PsbQ), PsbU, PsbV and a large number of cofactors. It forms dimeric complexes.

It localises to the cellular thylakoid membrane. Functionally, one of the components of the core complex of photosystem II (PSII). PSII is a light-driven water:plastoquinone oxidoreductase that uses light energy to abstract electrons from H(2)O, generating O(2) and a proton gradient subsequently used for ATP formation. It consists of a core antenna complex that captures photons, and an electron transfer chain that converts photonic excitation into a charge separation. This subunit is found at the monomer-monomer interface and is required for correct PSII assembly and/or dimerization. The sequence is that of Photosystem II reaction center protein L from Parasynechococcus marenigrum (strain WH8102).